A 457-amino-acid polypeptide reads, in one-letter code: BAG family molecular chaperone regulator 4 (457 aa).

The span at 1–20 shows a compositional bias: low complexity; that stretch reads MSALRRSGYGPSDGPSYGRY. The disordered stretch occupies residues 1–104; it reads MSALRRSGYG…PYPGYNSNYW (104 aa). A Phosphoserine modification is found at Ser7. Residues 31 to 48 show a composition bias toward pro residues; it reads HVPPPLYPPLRPEPPQPP. Omega-N-methylarginine occurs at positions 41, 54, 108, and 185. 2 disordered regions span residues 128–335 and 348–374; these read LNSY…SDLL and YGNASSEHPSNQVPSNNLPEECFSSDE. A compositionally biased stretch (polar residues) spans 160 to 193; the sequence is YTQSNYSTEVPNTYRSPGNSPTPMSRWMYSQQDC. Low complexity predominate over residues 255–268; sequence PWPSAAPSAPSAGS. The segment covering 284 to 295 has biased composition (pro residues); that stretch reads PQPPPSPPPQQP. Composition is skewed to polar residues over residues 326–335 and 348–365; these read AVNNDNSDLL and YGNASSEHPSNQVPSNNL. Positions 379 to 456 constitute a BAG domain; the sequence is SIKKIIHVLE…AILEKLEKKG (78 aa).

Binds to the ATPase domain of HSP/HSC70 chaperones. Binds to the death domain of TNFRSF12. Binds to the death domain of TNFRSF1A in the absence of TNF and thereby prevents binding of adapter molecules such as TRADD or TRAF2. Interacts with PRKN.

The protein localises to the cytoplasm. Its function is as follows. Inhibits the chaperone activity of HSP70/HSC70 by promoting substrate release. Prevents constitutive TNFRSF1A signaling. Negative regulator of PRKN translocation to damaged mitochondria. The sequence is that of BAG family molecular chaperone regulator 4 (Bag4) from Mus musculus (Mouse).